A 753-amino-acid chain; its full sequence is 5-methyltetrahydropteroyltriglutamate--homocysteine methyltransferase (753 aa).

Residues arginine 17–lysine 20 and lysine 117 each bind 5-methyltetrahydropteroyltri-L-glutamate. L-homocysteine contacts are provided by residues isoleucine 431 to serine 433 and glutamate 484. L-methionine-binding positions include isoleucine 431 to serine 433 and glutamate 484. 5-methyltetrahydropteroyltri-L-glutamate-binding positions include arginine 515–cysteine 516 and tryptophan 561. Aspartate 599 lines the L-homocysteine pocket. Position 599 (aspartate 599) interacts with L-methionine. Glutamate 605 lines the 5-methyltetrahydropteroyltri-L-glutamate pocket. 3 residues coordinate Zn(2+): histidine 641, cysteine 643, and glutamate 665. Histidine 694 functions as the Proton donor in the catalytic mechanism. Residue cysteine 726 coordinates Zn(2+).

It belongs to the vitamin-B12 independent methionine synthase family. Zn(2+) serves as cofactor.

It catalyses the reaction 5-methyltetrahydropteroyltri-L-glutamate + L-homocysteine = tetrahydropteroyltri-L-glutamate + L-methionine. It participates in amino-acid biosynthesis; L-methionine biosynthesis via de novo pathway; L-methionine from L-homocysteine (MetE route): step 1/1. Functionally, catalyzes the transfer of a methyl group from 5-methyltetrahydrofolate to homocysteine resulting in methionine formation. This Escherichia coli O6:K15:H31 (strain 536 / UPEC) protein is 5-methyltetrahydropteroyltriglutamate--homocysteine methyltransferase.